A 353-amino-acid chain; its full sequence is Holliday junction branch migration complex subunit RuvB (353 aa).

The interval 4–185 (ADRLITAAGG…FGIVQRLEFY (182 aa)) is large ATPase domain (RuvB-L). ATP is bound by residues I24, R25, G66, K69, T70, T71, 132–134 (EDF), R175, Y185, and R222. T70 contributes to the Mg(2+) binding site. The interval 186–256 (NIADLSTIVS…TADKALNLLD (71 aa)) is small ATPAse domain (RuvB-S). The tract at residues 259-353 (EHGFDHQDRR…DDVVDDPADL (95 aa)) is head domain (RuvB-H). 3 residues coordinate DNA: R295, R314, and R319.

The protein belongs to the RuvB family. As to quaternary structure, homohexamer. Forms an RuvA(8)-RuvB(12)-Holliday junction (HJ) complex. HJ DNA is sandwiched between 2 RuvA tetramers; dsDNA enters through RuvA and exits via RuvB. An RuvB hexamer assembles on each DNA strand where it exits the tetramer. Each RuvB hexamer is contacted by two RuvA subunits (via domain III) on 2 adjacent RuvB subunits; this complex drives branch migration. In the full resolvosome a probable DNA-RuvA(4)-RuvB(12)-RuvC(2) complex forms which resolves the HJ.

The protein localises to the cytoplasm. It catalyses the reaction ATP + H2O = ADP + phosphate + H(+). In terms of biological role, the RuvA-RuvB-RuvC complex processes Holliday junction (HJ) DNA during genetic recombination and DNA repair, while the RuvA-RuvB complex plays an important role in the rescue of blocked DNA replication forks via replication fork reversal (RFR). RuvA specifically binds to HJ cruciform DNA, conferring on it an open structure. The RuvB hexamer acts as an ATP-dependent pump, pulling dsDNA into and through the RuvAB complex. RuvB forms 2 homohexamers on either side of HJ DNA bound by 1 or 2 RuvA tetramers; 4 subunits per hexamer contact DNA at a time. Coordinated motions by a converter formed by DNA-disengaged RuvB subunits stimulates ATP hydrolysis and nucleotide exchange. Immobilization of the converter enables RuvB to convert the ATP-contained energy into a lever motion, pulling 2 nucleotides of DNA out of the RuvA tetramer per ATP hydrolyzed, thus driving DNA branch migration. The RuvB motors rotate together with the DNA substrate, which together with the progressing nucleotide cycle form the mechanistic basis for DNA recombination by continuous HJ branch migration. Branch migration allows RuvC to scan DNA until it finds its consensus sequence, where it cleaves and resolves cruciform DNA. This chain is Holliday junction branch migration complex subunit RuvB, found in Pseudomonas savastanoi pv. phaseolicola (strain 1448A / Race 6) (Pseudomonas syringae pv. phaseolicola (strain 1448A / Race 6)).